The chain runs to 93 residues: Probable Fe(2+)-trafficking protein (93 aa).

This sequence belongs to the Fe(2+)-trafficking protein family.

In terms of biological role, could be a mediator in iron transactions between iron acquisition and iron-requiring processes, such as synthesis and/or repair of Fe-S clusters in biosynthetic enzymes. This is Probable Fe(2+)-trafficking protein from Polaromonas naphthalenivorans (strain CJ2).